The primary structure comprises 250 residues: MSGHSKWATTKHKKAVIDAKRGKAFAKLIKNIEVAARTGGGDPAGNPTLYDAIQKAKKTSVPNDNIERARKRGAGEEAGGADWQTIMYEGYGPNGVAVLIECLTDNRNRAAGEVRTAMTRNGGNMADPGSVSYLFTRKGVVTLEKGDQSEDDVLMAVLDAGAEEVTDLGDTFEIVSEPTDLVAVRSALQEAGIDYDSAEADFRASVEVPVDADGARKVFKLVDALEESDDVQNVYTNVDLSDEVLAELDD.

The protein belongs to the TACO1 family.

The protein localises to the cytoplasm. The protein is Probable transcriptional regulatory protein RHA1_ro06891 of Rhodococcus jostii (strain RHA1).